A 779-amino-acid chain; its full sequence is Endonuclease MutS2 (779 aa).

328–335 (GPNTGGKT) serves as a coordination point for ATP. A Smr domain is found at 704–779 (LDLRGKRYEE…GSGATIVTLG (76 aa)).

It belongs to the DNA mismatch repair MutS family. MutS2 subfamily. In terms of assembly, homodimer. Binds to stalled ribosomes, contacting rRNA.

Its function is as follows. Endonuclease that is involved in the suppression of homologous recombination and thus may have a key role in the control of bacterial genetic diversity. Acts as a ribosome collision sensor, splitting the ribosome into its 2 subunits. Detects stalled/collided 70S ribosomes which it binds and splits by an ATP-hydrolysis driven conformational change. Acts upstream of the ribosome quality control system (RQC), a ribosome-associated complex that mediates the extraction of incompletely synthesized nascent chains from stalled ribosomes and their subsequent degradation. Probably generates substrates for RQC. This is Endonuclease MutS2 from Streptococcus pyogenes serotype M1.